The chain runs to 638 residues: Adhesion G-protein coupled receptor F2 (638 aa).

Residues 1–25 form the signal peptide; the sequence is MISARWLYCLVLLLATESCRLFCQA. The Extracellular segment spans residues 26 to 386; sequence ASKSKENVMP…ESPVLTYITY (361 aa). N-linked (GlcNAc...) asparagine glycans are attached at residues asparagine 155, asparagine 219, asparagine 248, asparagine 293, and asparagine 311. A GAIN-B domain is found at 233 to 377; that stretch reads PRNSLGKNFT…SILMSPNTVE (145 aa). 2 cysteine pairs are disulfide-bonded: cysteine 329–cysteine 356 and cysteine 344–cysteine 358. The interval 329–377 is GPS; the sequence is CVGWHSLESRWDRRACKMIQENSRQAICRCQPNKFFTSFSILMSPNTVE. The chain crosses the membrane as a helical span at residues 387-407; it reads IGLGISICSLIICLAIEALVW. Over 408 to 422 the chain is Cytoplasmic; sequence SQVTKTEISYLRHLC. Residues 423–443 traverse the membrane as a helical segment; it reads IANIAVTLLMADVWFIVASFL. The Extracellular portion of the chain corresponds to 444 to 465; sequence SGPIVHHNGCVTATFFVHFFYL. The helical transmembrane segment at 466–486 threads the bilayer; it reads SVFFWMLAKALLILYGILIVF. The Cytoplasmic portion of the chain corresponds to 487-493; the sequence is HTLPKSC. The helical transmembrane segment at 494 to 514 threads the bilayer; it reads LVASLFTVGYGCPLVIAVITL. The Extracellular portion of the chain corresponds to 515–541; that stretch reads AVTEPGKGYLRPEACWLNWDMTKALLA. Residues 542-562 traverse the membrane as a helical segment; sequence FVVPALAIVVVNLITVTLVII. At 563–586 the chain is on the cytoplasmic side; the sequence is KTQRAAVGSSMFQEVRAIVRICKN. A helical membrane pass occupies residues 587–607; it reads IAILTPLLGLTWGFGIATVVA. Residues 608 to 610 lie on the Extracellular side of the membrane; it reads GHS. The helical transmembrane segment at 611-631 threads the bilayer; it reads LAFHIIFSLLNALQVSPDAMI. The Cytoplasmic portion of the chain corresponds to 632–638; the sequence is ESEWRGC.

Belongs to the G-protein coupled receptor 2 family. Adhesion G-protein coupled receptor (ADGR) subfamily.

The protein localises to the membrane. Its function is as follows. Orphan receptor. This is Adhesion G-protein coupled receptor F2 (Adgrf2) from Rattus norvegicus (Rat).